The following is a 244-amino-acid chain: Type III pantothenate kinase (244 aa).

Residue 8 to 15 (DQGNSACK) coordinates ATP. Position 94–97 (94–97 (GADR)) interacts with substrate. Aspartate 96 (proton acceptor) is an active-site residue. Aspartate 117 contacts K(+). Threonine 120 is an ATP binding site. Threonine 175 is a substrate binding site.

It belongs to the type III pantothenate kinase family. As to quaternary structure, homodimer. Requires NH4(+) as cofactor. K(+) is required as a cofactor.

It is found in the cytoplasm. The enzyme catalyses (R)-pantothenate + ATP = (R)-4'-phosphopantothenate + ADP + H(+). The protein operates within cofactor biosynthesis; coenzyme A biosynthesis; CoA from (R)-pantothenate: step 1/5. In terms of biological role, catalyzes the phosphorylation of pantothenate (Pan), the first step in CoA biosynthesis. This Porphyromonas gingivalis (strain ATCC 33277 / DSM 20709 / CIP 103683 / JCM 12257 / NCTC 11834 / 2561) protein is Type III pantothenate kinase.